A 316-amino-acid chain; its full sequence is ATP synthase gamma chain (316 aa).

This sequence belongs to the ATPase gamma chain family. As to quaternary structure, F-type ATPases have 2 components, CF(1) - the catalytic core - and CF(0) - the membrane proton channel. CF(1) has five subunits: alpha(3), beta(3), gamma(1), delta(1), epsilon(1). CF(0) has three main subunits: a, b and c.

It is found in the cellular thylakoid membrane. Its function is as follows. Produces ATP from ADP in the presence of a proton gradient across the membrane. The gamma chain is believed to be important in regulating ATPase activity and the flow of protons through the CF(0) complex. The sequence is that of ATP synthase gamma chain from Prochlorococcus marinus subsp. pastoris (strain CCMP1986 / NIES-2087 / MED4).